A 203-amino-acid polypeptide reads, in one-letter code: Glycerol-3-phosphate acyltransferase (203 aa).

5 helical membrane-spanning segments follow: residues 12 to 32, 66 to 86, 88 to 108, 118 to 138, and 159 to 179; these read ATLL…GLIL, TLLL…LWGV, AGIA…WLSF, IGVL…IWLA, and IALY…MTVI.

Belongs to the PlsY family. As to quaternary structure, probably interacts with PlsX.

The protein localises to the cell inner membrane. It catalyses the reaction an acyl phosphate + sn-glycerol 3-phosphate = a 1-acyl-sn-glycero-3-phosphate + phosphate. It participates in lipid metabolism; phospholipid metabolism. Its function is as follows. Catalyzes the transfer of an acyl group from acyl-phosphate (acyl-PO(4)) to glycerol-3-phosphate (G3P) to form lysophosphatidic acid (LPA). This enzyme utilizes acyl-phosphate as fatty acyl donor, but not acyl-CoA or acyl-ACP. The polypeptide is Glycerol-3-phosphate acyltransferase (Sinorhizobium fredii (strain NBRC 101917 / NGR234)).